Reading from the N-terminus, the 492-residue chain is Probable Xaa-Pro aminopeptidase ACLA_020440 (492 aa).

Mn(2+) contacts are provided by aspartate 272, aspartate 283, glutamate 421, and glutamate 460.

The protein belongs to the peptidase M24B family. Requires Mn(2+) as cofactor.

The enzyme catalyses Release of any N-terminal amino acid, including proline, that is linked to proline, even from a dipeptide or tripeptide.. Catalyzes the removal of a penultimate prolyl residue from the N-termini of peptides. The polypeptide is Probable Xaa-Pro aminopeptidase ACLA_020440 (Aspergillus clavatus (strain ATCC 1007 / CBS 513.65 / DSM 816 / NCTC 3887 / NRRL 1 / QM 1276 / 107)).